Consider the following 1197-residue polypeptide: uncharacterized protein (1197 aa).

This is an uncharacterized protein from Sinorhizobium fredii (strain NBRC 101917 / NGR234).